A 202-amino-acid polypeptide reads, in one-letter code: Recombination protein RecR (202 aa).

A C4-type zinc finger spans residues 61-76 (CARCNSFTEDDICATC). The Toprim domain occupies 84 to 179 (SVLCVVETPA…KVTRLARGVP (96 aa)).

It belongs to the RecR family.

Functionally, may play a role in DNA repair. It seems to be involved in an RecBC-independent recombinational process of DNA repair. It may act with RecF and RecO. The protein is Recombination protein RecR of Bordetella petrii (strain ATCC BAA-461 / DSM 12804 / CCUG 43448).